We begin with the raw amino-acid sequence, 359 residues long: 3-isopropylmalate dehydrogenase (359 aa).

NAD(+) is bound at residue Gly77–Glu88. 4 residues coordinate substrate: Arg95, Arg105, Arg134, and Asp223. Positions 223, 248, and 252 each coordinate Mg(2+). An NAD(+)-binding site is contributed by Gly287–Asn298.

It belongs to the isocitrate and isopropylmalate dehydrogenases family. Homodimer. Mg(2+) is required as a cofactor. It depends on Mn(2+) as a cofactor.

It localises to the cytoplasm. It catalyses the reaction (2R,3S)-3-isopropylmalate + NAD(+) = 4-methyl-2-oxopentanoate + CO2 + NADH. The protein operates within amino-acid biosynthesis; L-leucine biosynthesis; L-leucine from 3-methyl-2-oxobutanoate: step 3/4. In terms of biological role, catalyzes the oxidation of 3-carboxy-2-hydroxy-4-methylpentanoate (3-isopropylmalate) to 3-carboxy-4-methyl-2-oxopentanoate. The product decarboxylates to 4-methyl-2 oxopentanoate. This is 3-isopropylmalate dehydrogenase (LEU2) from Diutina rugosa (Yeast).